Reading from the N-terminus, the 216-residue chain is MSLPMLQVALDNQTMDSAYETTRLIAEEVDIIEVGTILCVGEGVRAVRDLKALYPHKIVLADAKIADAGKILSRMCFEANADWVTVICCADINTAKGALDVAKEFNGDVQIELTGYWTWEQAQQWRDAGIQQVVYHRSRDAQAAGVAWGEADITAIKRLSDMGFKVTVTGGLALEDLPLFKGIPIHVFIAGRSIRDAESPVEAARQFKRSIAQLWG.

Residue Asp-11 participates in substrate binding. 2 residues coordinate Mg(2+): Glu-33 and Asp-62. Arg-192 lines the substrate pocket.

Belongs to the HPS/KGPDC family. KGPDC subfamily. Homodimer. Requires Mg(2+) as cofactor.

It catalyses the reaction 3-dehydro-L-gulonate 6-phosphate + H(+) = L-xylulose 5-phosphate + CO2. It functions in the pathway cofactor degradation; L-ascorbate degradation; D-xylulose 5-phosphate from L-ascorbate: step 2/4. In terms of biological role, catalyzes the decarboxylation of 3-keto-L-gulonate-6-P into L-xylulose-5-P. Is involved in the anaerobic L-ascorbate utilization. This is 3-keto-L-gulonate-6-phosphate decarboxylase UlaD from Salmonella choleraesuis (strain SC-B67).